A 431-amino-acid polypeptide reads, in one-letter code: Evolutionarily conserved signaling intermediate in Toll pathway, mitochondrial (431 aa).

The transit peptide at 1 to 48 (MSWVQATLLARGLCRAWGGTCGAALTGTSISQVPRRLPRGLHCSAAAH) directs the protein to the mitochondrion. A Glycyl lysine isopeptide (Lys-Gly) (interchain with G-Cter in ubiquitin) cross-link involves residue Lys372. Residues 400–431 (LQTSSAGLEEPPLPEDHQEEDDNLQRQQQGQS) form a disordered region.

Belongs to the ECSIT family. Interacts with MAP3K1, SMAD4 and TRAF6. Interacts with SMAD1 only after BMP4-treatment. Part of the mitochondrial complex I assembly/MCIA complex that comprises at least the core subunits TMEM126B, NDUFAF1, ECSIT and ACAD9 and complement subunits such as COA1 and TMEM186. Interacts with NDUFAF1. Interacts with ACAD9. Interacts with TRIM59. Interacts with TMEM70 and TMEM242. Interacts (when ubiquitinated) with NF-kappa-B subunits RELA and NFKB1. Interacts with RIGI, IFIT1 and MAVS; these interactions promote RLR-mediated type I IFN induction. Interacts with SQSTM1; this interaction inhibits TLR4 signaling via functional regulation of the TRAF6-ECSIT complex. Interacts with cereblon/CRBN; this interaction inhibits the ubiquitination of ECSIT. Ubiquitinated on Lys-372; leading to translocation in the nucleus together with RELA and NFKB1 and expression of NF-kappa-B-dependent genes.

Its subcellular location is the cytoplasm. It is found in the nucleus. It localises to the mitochondrion. Functionally, adapter protein that plays a role in different signaling pathways including TLRs and IL-1 pathways or innate antiviral induction signaling. Plays a role in the activation of NF-kappa-B by forming a signal complex with TRAF6 and TAK1/MAP3K7 to activate TAK1/MAP3K7 leading to activation of IKKs. Once ubiquitinated, interacts with the dissociated RELA and NFKB1 proteins and translocates to the nucleus where it induces NF-kappa-B-dependent gene expression. Plays a role in innate antiviral immune response by bridging the pattern recognition receptors RIGI and MDA5/IFIT1 to the MAVS complex at the mitochondrion. Promotes proteolytic activation of MAP3K1. Involved in the BMP signaling pathway. Required for normal embryonic development. In terms of biological role, as part of the MCIA complex, involved in the assembly of the mitochondrial complex I. This is Evolutionarily conserved signaling intermediate in Toll pathway, mitochondrial from Homo sapiens (Human).